We begin with the raw amino-acid sequence, 283 residues long: Protease HtpX (283 aa).

The next 2 helical transmembrane spans lie at 4–24 (ILLFLATNMAVMLVLGIILNV) and 33–53 (GGILIMALLFGFAGSLISLFL). A Zn(2+)-binding site is contributed by His139. Glu140 is a catalytic residue. A Zn(2+)-binding site is contributed by His143. Transmembrane regions (helical) follow at residues 147–167 (GDMVTMALLQGVLNTFVIFLS) and 190–210 (IYFLVSMVLEMLFGVLASIIA). Glu218 serves as a coordination point for Zn(2+).

This sequence belongs to the peptidase M48B family. Requires Zn(2+) as cofactor.

The protein localises to the cell inner membrane. The protein is Protease HtpX of Haemophilus influenzae (strain 86-028NP).